We begin with the raw amino-acid sequence, 74 residues long: Translation initiation factor IF-1 (74 aa).

An S1-like domain is found at 1–72 (MGKEDVIRME…TRGRIVYRKK (72 aa)).

The protein belongs to the IF-1 family. Component of the 30S ribosomal translation pre-initiation complex which assembles on the 30S ribosome in the order IF-2 and IF-3, IF-1 and N-formylmethionyl-tRNA(fMet); mRNA recruitment can occur at any time during PIC assembly.

It localises to the cytoplasm. One of the essential components for the initiation of protein synthesis. Stabilizes the binding of IF-2 and IF-3 on the 30S subunit to which N-formylmethionyl-tRNA(fMet) subsequently binds. Helps modulate mRNA selection, yielding the 30S pre-initiation complex (PIC). Upon addition of the 50S ribosomal subunit IF-1, IF-2 and IF-3 are released leaving the mature 70S translation initiation complex. This is Translation initiation factor IF-1 from Thermotoga petrophila (strain ATCC BAA-488 / DSM 13995 / JCM 10881 / RKU-1).